Reading from the N-terminus, the 139-residue chain is Ribulose bisphosphate carboxylase small subunit (139 aa).

It belongs to the RuBisCO small chain family. In terms of assembly, heterohexadecamer of 8 large and 8 small subunits.

It is found in the plastid. The protein localises to the chloroplast. RuBisCO catalyzes two reactions: the carboxylation of D-ribulose 1,5-bisphosphate, the primary event in carbon dioxide fixation, as well as the oxidative fragmentation of the pentose substrate in the photorespiration process. Both reactions occur simultaneously and in competition at the same active site. Although the small subunit is not catalytic it is essential for maximal activity. The protein is Ribulose bisphosphate carboxylase small subunit of Thalassiosira nordenskioeldii (Marine diatom).